A 116-amino-acid chain; its full sequence is Large ribosomal subunit protein bL20 (116 aa).

The protein belongs to the bacterial ribosomal protein bL20 family.

Functionally, binds directly to 23S ribosomal RNA and is necessary for the in vitro assembly process of the 50S ribosomal subunit. It is not involved in the protein synthesizing functions of that subunit. The sequence is that of Large ribosomal subunit protein bL20 from Fusobacterium nucleatum subsp. nucleatum (strain ATCC 25586 / DSM 15643 / BCRC 10681 / CIP 101130 / JCM 8532 / KCTC 2640 / LMG 13131 / VPI 4355).